The chain runs to 437 residues: Vasoactive intestinal polypeptide receptor 2 (437 aa).

The signal sequence occupies residues 1-22 (MRASVVLTCYCWLLVRVSSIHP). At 23–123 (ECRFHLEIQE…EDESKITFYI (101 aa)) the chain is on the extracellular side. Intrachain disulfides connect Cys37–Cys60, Cys51–Cys92, and Cys74–Cys108. N-linked (GlcNAc...) asparagine glycans are attached at residues Asn57, Asn87, and Asn91. A helical membrane pass occupies residues 124–149 (LVKAIYTLGYSVSLMSLTTGSIIICL). Residues 150-157 (FRKLHCTR) lie on the Cytoplasmic side of the membrane. Residues 158–179 (NYIHLNLFLSFMLRAISVLVKD) traverse the membrane as a helical segment. The Extracellular portion of the chain corresponds to 180–202 (SVLYSSSGTLRCHDQPGSWVGCK). Cys201 and Cys270 are joined by a disulfide. Residues 203–227 (LSLVFFQYCIMANFYWLLVEGLYLH) traverse the membrane as a helical segment. The Cytoplasmic segment spans residues 228–238 (TLLVAILPPSR). A helical transmembrane segment spans residues 239-260 (CFLAYLLIGWGIPSVCIGAWIA). Residues 261-279 (TRLSLEDTGCWDTNDHSIP) are Extracellular-facing. A helical membrane pass occupies residues 280–303 (WWVIRMPILISIVVNFALFISIVR). Residues 304–324 (ILLQKLTSPDVGGNDQSQYKR) lie on the Cytoplasmic side of the membrane. Residues 325 to 345 (LAKSTLLLIPLFGVHYMVFAA) traverse the membrane as a helical segment. At 346–353 (FPIGISST) the chain is on the extracellular side. The helical transmembrane segment at 354–377 (YQILFELCVGSFQGLVVAVLYCFL) threads the bilayer. Residues 378–437 (NSEVQCELKRRWRGLCLTQPGSRDYRLHSWSMSRNGSESALQIHRGSRTQSFLQSETSVI) are Cytoplasmic-facing.

It belongs to the G-protein coupled receptor 2 family. In terms of assembly, interacts with ADCYAP1/PACAP (via N-terminal extracellular domain); activated by PACAP27 and CAPAC38 neuropeptides. Interacts with VIP; the interaction results in VIPR1 activation. As to expression, mainly in the thalamus, hippocampus and in the suprachiasmatic nucleus.

It is found in the cell membrane. Functionally, g protein-coupled receptor activated by the neuropeptides vasoactive intestinal peptide (VIP) and pituitary adenylate cyclase-activating polypeptide (ADCYAP1/PACAP). Binds VIP and both PACAP27 and PACAP38 bioactive peptides with the order of ligand affinity of VIP = PACAP38 &gt; PACAP27. Ligand binding causes a conformation change that triggers signaling via guanine nucleotide-binding proteins (G proteins) and modulates the activity of downstream effectors. Activates cAMP-dependent pathway. May be coupled to phospholipase C. In Rattus norvegicus (Rat), this protein is Vasoactive intestinal polypeptide receptor 2.